A 292-amino-acid polypeptide reads, in one-letter code: GTP cyclohydrolase FolE2 (292 aa).

This sequence belongs to the GTP cyclohydrolase IV family.

The enzyme catalyses GTP + H2O = 7,8-dihydroneopterin 3'-triphosphate + formate + H(+). Its pathway is cofactor biosynthesis; 7,8-dihydroneopterin triphosphate biosynthesis; 7,8-dihydroneopterin triphosphate from GTP: step 1/1. Its function is as follows. Converts GTP to 7,8-dihydroneopterin triphosphate. The sequence is that of GTP cyclohydrolase FolE2 from Macrococcus caseolyticus (strain JCSC5402) (Macrococcoides caseolyticum).